Reading from the N-terminus, the 406-residue chain is DNA primase DnaG (406 aa).

A Toprim domain is found at 169-247 (PNLIIVEGRA…KIDFVARAPI (79 aa)). Residues Glu175, Asp220, and Asp222 each contribute to the Mg(2+) site.

It belongs to the archaeal DnaG primase family. In terms of assembly, forms a ternary complex with MCM helicase and DNA. Component of the archaeal exosome complex. Interacts with Csl4 but not with Rrp4. The cofactor is Mg(2+).

It carries out the reaction ssDNA + n NTP = ssDNA/pppN(pN)n-1 hybrid + (n-1) diphosphate.. In terms of biological role, RNA polymerase that catalyzes the synthesis of short RNA molecules used as primers for DNA polymerase during DNA replication. Can use NTPs but not dNTPs. Binds DNA. Also part of the exosome, which is a complex involved in RNA degradation. Acts as a poly(A)-binding protein that enhances the interaction between heteromeric, adenine-rich transcripts and the exosome. This is DNA primase DnaG from Saccharolobus solfataricus (strain ATCC 35092 / DSM 1617 / JCM 11322 / P2) (Sulfolobus solfataricus).